A 261-amino-acid polypeptide reads, in one-letter code: RING finger and CHY zinc finger domain-containing protein 1 (261 aa).

A CHY-type zinc finger spans residues 13–80; the sequence is QERGQRGCEH…AQQTCEECST (68 aa). Cys-20, His-22, Cys-33, Cys-34, Cys-40, Cys-43, His-44, His-50, Cys-62, Cys-65, Cys-75, Cys-78, Cys-87, Cys-90, His-101, Cys-102, Cys-105, Cys-108, His-118, Cys-119, Cys-122, Cys-125, His-134, and Cys-136 together coordinate Zn(2+). The CTCHY-type zinc finger occupies 82 to 144; it reads FGEYYCDICH…KCIENVSRQN (63 aa). The segment at 145–189 adopts an RING-type zinc-finger fold; the sequence is CPICLEDIHTSRVVAHVLPCGHLLHRTCYEEMLKEGYRCPLCMHS. At Ser-257 the chain carries Phosphoserine.

In terms of assembly, monomer and homodimer. Interacts with AR, MDM2, KAT5, PLAG1, PLAGL2, COPE, UBE2D2 and GORAB/NTKLBP1. Subject to ubiquitination and proteasomal degradation. Interaction with PLAGL2 or KAT5 enhances protein stability.

The protein resides in the nucleus. Its subcellular location is the nucleus speckle. It localises to the cytoplasm. It catalyses the reaction S-ubiquitinyl-[E2 ubiquitin-conjugating enzyme]-L-cysteine + [acceptor protein]-L-lysine = [E2 ubiquitin-conjugating enzyme]-L-cysteine + N(6)-ubiquitinyl-[acceptor protein]-L-lysine.. It functions in the pathway protein modification; protein ubiquitination. In terms of biological role, E3 ubiquitin-protein ligase that mediates ubiquitination of target proteins, including p53/TP53, TP73, HDAC1 and CDKN1B. Mediates ubiquitination and degradation of p53/TP53; preferentially acts on tetrameric p53/TP53. Catalyzes monoubiquitinates the translesion DNA polymerase POLH. Involved in the ribosome-associated quality control (RQC) pathway, which mediates the extraction of incompletely synthesized nascent chains from stalled ribosomes: RCHY1 acts downstream of NEMF and recognizes CAT tails associated with stalled nascent chains, leading to their ubiquitination and degradation. Has no E3 ubiquitin-protein ligase activity. This Homo sapiens (Human) protein is RING finger and CHY zinc finger domain-containing protein 1 (RCHY1).